A 350-amino-acid polypeptide reads, in one-letter code: Patr class I histocompatibility antigen, alpha chain E (350 aa).

The signal sequence occupies residues methionine 1–alanine 21. Residues glycine 22–alanine 111 form an alpha-1 region. Residues glycine 22–isoleucine 305 are Extracellular-facing. N-linked (GlcNAc...) asparagine glycosylation is present at asparagine 107. The tract at residues glycine 112–leucine 203 is alpha-2. 2 cysteine pairs are disulfide-bonded: cysteine 122/cysteine 185 and cysteine 224/cysteine 280. The segment at glutamate 204–tryptophan 295 is alpha-3. The Ig-like C1-type domain maps to proline 206–arginine 294. Residues lysine 296–isoleucine 305 are connecting peptide. Residues valine 306–tryptophan 329 form a helical membrane-spanning segment. The Cytoplasmic portion of the chain corresponds to arginine 330 to alanine 350.

The protein belongs to the MHC class I family. Heterodimer of an alpha chain and a beta chain (beta-2-microglobulin).

The protein localises to the membrane. Functionally, preferably binds to a peptide derived from the signal sequence of most HLA-A, -B, -C and -G molecules. The sequence is that of Patr class I histocompatibility antigen, alpha chain E (Patr-E) from Pan troglodytes (Chimpanzee).